We begin with the raw amino-acid sequence, 426 residues long: Enolase (426 aa).

Gln-163 contributes to the (2R)-2-phosphoglycerate binding site. Catalysis depends on Glu-205, which acts as the Proton donor. 3 residues coordinate Mg(2+): Asp-242, Glu-285, and Asp-312. (2R)-2-phosphoglycerate-binding residues include Lys-337, Arg-366, Ser-367, and Lys-388. The active-site Proton acceptor is Lys-337.

This sequence belongs to the enolase family. Requires Mg(2+) as cofactor.

Its subcellular location is the cytoplasm. It is found in the secreted. The protein resides in the cell surface. It carries out the reaction (2R)-2-phosphoglycerate = phosphoenolpyruvate + H2O. It participates in carbohydrate degradation; glycolysis; pyruvate from D-glyceraldehyde 3-phosphate: step 4/5. In terms of biological role, catalyzes the reversible conversion of 2-phosphoglycerate (2-PG) into phosphoenolpyruvate (PEP). It is essential for the degradation of carbohydrates via glycolysis. The protein is Enolase of Rhodospirillum centenum (strain ATCC 51521 / SW).